The sequence spans 382 residues: Carboxynorspermidine/carboxyspermidine decarboxylase (382 aa).

Lys41 is subject to N6-(pyridoxal phosphate)lysine. Substrate is bound by residues Glu236 and Asp272.

This sequence belongs to the Orn/Lys/Arg decarboxylase class-II family. NspC subfamily. As to quaternary structure, homodimer. It depends on pyridoxal 5'-phosphate as a cofactor.

The protein resides in the cytoplasm. It carries out the reaction carboxynorspermidine + H(+) = norspermidine + CO2. The enzyme catalyses carboxyspermidine + H(+) = spermidine + CO2. Catalyzes the decarboxylation of carboxynorspermidine and carboxyspermidine in vitro. In vivo, responsible for synthesizing spermidine, but not sym-norspermidine. The polypeptide is Carboxynorspermidine/carboxyspermidine decarboxylase (Campylobacter jejuni subsp. jejuni serotype O:6 (strain 81116 / NCTC 11828)).